The chain runs to 2365 residues: TRIO and F-actin-binding protein (2365 aa).

4 disordered regions span residues 48–1106 (VPYC…HEPL), 1168–1554 (HRDA…SERR), 1593–1667 (LPRK…WPKI), and 1679–1751 (AGLE…TSWR). Residues 132–151 (SDPTSSPDSATPDDTSNSSS) are compositionally biased toward low complexity. His221 carries the post-translational modification Phosphothreonine. Polar residues-rich tracts occupy residues 239 to 271 (TLTQ…QAAS), 291 to 375 (RASS…TPQR), 403 to 422 (RTSC…SPNR), 429 to 471 (RTSC…SPNR), 478 to 520 (RTSC…SPNR), 527 to 569 (RTSC…SPNR), 576 to 618 (RTSC…SPNR), 625 to 650 (RTSC…SPRT), 661 to 674 (SSPN…NPRT), 683 to 701 (RASS…TSCA), 709 to 722 (SSPN…NPRT), 745 to 785 (RTSC…SPNR), and 807 to 837 (IRAT…PKTS). The essentiel for its aggregation stretch occupies residues 324 to 348 (STQEDTPRASSTQWNTPRASSPSRS). Phosphothreonine is present on Gln457. A compositionally biased stretch (basic and acidic residues) spans 839 to 854 (TKRDNLRPTCTQRDRT). Composition is skewed to polar residues over residues 855 to 898 (QSFS…SSPH), 913 to 927 (PTQS…PSRS), and 945 to 994 (DRPQ…TSSP). The span at 1045–1056 (RAPESEPPHHEP) shows a compositional bias: basic and acidic residues. Positions 1195-1206 (SMESLAPSTDSL) are enriched in polar residues. Basic and acidic residues-rich tracts occupy residues 1260–1270 (ETRHNLEREEY) and 1303–1319 (GRAE…RKSE). The span at 1332 to 1349 (SQQPSQGQSQLLRRQSSP) shows a compositional bias: low complexity. Composition is skewed to basic and acidic residues over residues 1378 to 1387 (SPEKRPEGDR) and 1402 to 1411 (TPERELRTQR). Residues 1452 to 1461 (GGLGPGGWWG) show a composition bias toward gly residues. The segment covering 1494–1508 (WEEKPTHELPRELGK) has biased composition (basic and acidic residues). Polar residues predominate over residues 1524-1534 (ESSQSWHSGTP). Over residues 1594-1606 (PRKDPAGHRDDLA) the composition is skewed to basic and acidic residues. Polar residues predominate over residues 1645–1664 (ALQSQSPVQLPSPACTSTQW). The span at 1696–1705 (PSLPELQFQP) shows a compositional bias: low complexity. Residues 1724–1735 (KQADSADKRPAE) show a composition bias toward basic and acidic residues. The region spanning 1778-1887 (LNFKKGWMSI…WIEALRKTVR (110 aa)) is the PH domain. Ser1796 carries the post-translational modification Phosphoserine. Disordered stretches follow at residues 1889–2017 (TSAP…LTED) and 2174–2194 (LSKT…HQSD). At Arg1930 the chain carries Omega-N-methylarginine. Phosphoserine occurs at positions 1949 and 1955. Residues 1965–1997 (TPDRLAKQEELERDLAQRSEERRKWFEATDSRT) are compositionally biased toward basic and acidic residues. 2 coiled-coil regions span residues 2062-2247 (SDGH…NQEL) and 2281-2361 (ELEV…SMRN).

In terms of assembly, isoform 1 forms aggregates. Isoform 1 binds to TRIO and F-actin. Isoform 1 may also interact with myosin II. Interacts with HECTD3. Interacts with PJVK. Interacts with TERF1; mediates TERF1 localization to the centrosome. Ubiquitinated by HECTD3, leading to its degradation by the proteasome. In terms of processing, phosphorylation at Thr-457 by PLK1 ensures mitotic progression and is essential for accurate chromosome segregation. Phosphorylation at residues Thr-221 and Thr-457 by kinase NEK2A and PLK1 coordinates TERF1 translocation from telomere to spindle pole. In terms of tissue distribution, widely expressed. Highly expressed in heart and placenta. Expressed in fetal brain, retina and cochlea but is not detectable in the other tissues.

It localises to the nucleus. The protein resides in the cytoplasm. It is found in the cytoskeleton. The protein localises to the microtubule organizing center. Its subcellular location is the centrosome. It localises to the midbody. The protein resides in the chromosome. It is found in the telomere. In terms of biological role, regulates actin cytoskeletal organization, cell spreading and cell contraction by directly binding and stabilizing filamentous F-actin and prevents its depolymerization. May also serve as a linker protein to recruit proteins required for F-actin formation and turnover. Essential for correct mitotic progression. Plays a pivotal role in the formation of stereocilia rootlets. In Homo sapiens (Human), this protein is TRIO and F-actin-binding protein (TRIOBP).